Here is a 175-residue protein sequence, read N- to C-terminus: ATP-dependent protease subunit HslV (175 aa).

The active site involves threonine 2. Alanine 156, cysteine 159, and threonine 162 together coordinate Na(+).

This sequence belongs to the peptidase T1B family. HslV subfamily. A double ring-shaped homohexamer of HslV is capped on each side by a ring-shaped HslU homohexamer. The assembly of the HslU/HslV complex is dependent on binding of ATP.

Its subcellular location is the cytoplasm. The catalysed reaction is ATP-dependent cleavage of peptide bonds with broad specificity.. Allosterically activated by HslU binding. Protease subunit of a proteasome-like degradation complex believed to be a general protein degrading machinery. The sequence is that of ATP-dependent protease subunit HslV from Rhizobium etli (strain ATCC 51251 / DSM 11541 / JCM 21823 / NBRC 15573 / CFN 42).